The primary structure comprises 355 residues: Epoxyqueuosine reductase (355 aa).

The active-site Proton donor is aspartate 143. The 4Fe-4S ferredoxin-type domain occupies 185 to 217; sequence LPLPIDTPATAHCGTCTRCIDICPTQAIIAPHR. [4Fe-4S] cluster is bound by residues cysteine 197, cysteine 200, cysteine 203, cysteine 207, cysteine 223, cysteine 250, cysteine 253, and cysteine 257.

The protein belongs to the QueG family. As to quaternary structure, monomer. It depends on cob(II)alamin as a cofactor. [4Fe-4S] cluster is required as a cofactor.

Its subcellular location is the cytoplasm. It catalyses the reaction epoxyqueuosine(34) in tRNA + AH2 = queuosine(34) in tRNA + A + H2O. It functions in the pathway tRNA modification; tRNA-queuosine biosynthesis. In terms of biological role, catalyzes the conversion of epoxyqueuosine (oQ) to queuosine (Q), which is a hypermodified base found in the wobble positions of tRNA(Asp), tRNA(Asn), tRNA(His) and tRNA(Tyr). The protein is Epoxyqueuosine reductase of Xanthomonas campestris pv. campestris (strain ATCC 33913 / DSM 3586 / NCPPB 528 / LMG 568 / P 25).